Here is a 339-residue protein sequence, read N- to C-terminus: Dihydroorotate dehydrogenase (quinone) (339 aa).

FMN-binding positions include 62 to 66 (AGMDK) and Thr-86. Residue Lys-66 coordinates substrate. 111–115 (NRMGF) provides a ligand contact to substrate. Asn-139 and Asn-172 together coordinate FMN. Position 172 (Asn-172) interacts with substrate. Ser-175 acts as the Nucleophile in catalysis. Asn-177 provides a ligand contact to substrate. FMN contacts are provided by Lys-217 and Thr-245. Substrate is bound at residue 246–247 (NT). Residues Gly-268, Gly-297, and 318–319 (YS) contribute to the FMN site.

The protein belongs to the dihydroorotate dehydrogenase family. Type 2 subfamily. In terms of assembly, monomer. The cofactor is FMN.

The protein localises to the cell membrane. The enzyme catalyses (S)-dihydroorotate + a quinone = orotate + a quinol. It functions in the pathway pyrimidine metabolism; UMP biosynthesis via de novo pathway; orotate from (S)-dihydroorotate (quinone route): step 1/1. Its function is as follows. Catalyzes the conversion of dihydroorotate to orotate with quinone as electron acceptor. The polypeptide is Dihydroorotate dehydrogenase (quinone) (Shewanella putrefaciens (strain CN-32 / ATCC BAA-453)).